A 572-amino-acid chain; its full sequence is Phosphoenolpyruvate-protein phosphotransferase (572 aa).

The active-site Tele-phosphohistidine intermediate is His191. Residues Arg298 and Arg334 each coordinate phosphoenolpyruvate. Mg(2+)-binding residues include Glu433 and Asp457. Residues Asn456–Asp457 and Arg467 contribute to the phosphoenolpyruvate site. The active-site Proton donor is the Cys504.

This sequence belongs to the PEP-utilizing enzyme family. As to quaternary structure, homodimer. Mg(2+) serves as cofactor.

It is found in the cytoplasm. It carries out the reaction L-histidyl-[protein] + phosphoenolpyruvate = N(pros)-phospho-L-histidyl-[protein] + pyruvate. General (non sugar-specific) component of the phosphoenolpyruvate-dependent sugar phosphotransferase system (sugar PTS). This major carbohydrate active-transport system catalyzes the phosphorylation of incoming sugar substrates concomitantly with their translocation across the cell membrane. Enzyme I transfers the phosphoryl group from phosphoenolpyruvate (PEP) to the phosphoryl carrier protein (HPr). The protein is Phosphoenolpyruvate-protein phosphotransferase (ptsI) of Staphylococcus aureus (strain COL).